We begin with the raw amino-acid sequence, 167 residues long: Small ribosomal subunit protein uS5 (167 aa).

The S5 DRBM domain occupies 12–75 (LEDNVVAINR…EAARKNLIEV (64 aa)).

Belongs to the universal ribosomal protein uS5 family. As to quaternary structure, part of the 30S ribosomal subunit. Contacts proteins S4 and S8.

In terms of biological role, with S4 and S12 plays an important role in translational accuracy. Located at the back of the 30S subunit body where it stabilizes the conformation of the head with respect to the body. This chain is Small ribosomal subunit protein uS5, found in Levilactobacillus brevis (strain ATCC 367 / BCRC 12310 / CIP 105137 / JCM 1170 / LMG 11437 / NCIMB 947 / NCTC 947) (Lactobacillus brevis).